Here is a 122-residue protein sequence, read N- to C-terminus: Large ribosomal subunit protein uL14c (122 aa).

This sequence belongs to the universal ribosomal protein uL14 family. In terms of assembly, part of the 50S ribosomal subunit.

The protein resides in the plastid. It localises to the chloroplast. Functionally, binds to 23S rRNA. The polypeptide is Large ribosomal subunit protein uL14c (Calycanthus floridus var. glaucus (Eastern sweetshrub)).